The primary structure comprises 671 residues: Kinesin-like protein KIF2C (671 aa).

The interval 1 to 200 is globular; it reads MIDFDDVAAI…CHPLTMTDPI (200 aa). Residues 36-62 are disordered; sequence KQKRRSVNSKIPAPKESLRTRSTRMST. Phosphoserine; by AURKB is present on serine 41. The Microtubule tip localization signal signature appears at 44-47; sequence SKIP. 7 positions are modified to phosphoserine: serine 52, serine 57, serine 61, serine 112, serine 121, serine 133, and serine 138. The interval 153–184 is negative regulator of microtubule-binding; the sequence is EKKAQNSEMRMKRAQEYDSSFPNWEFARMIKE. Disulfide bonds link cysteine 191-cysteine 233 and cysteine 290-cysteine 506. One can recognise a Kinesin motor domain in the interval 204–534; it reads RICVCVRKRP…LRYADRVKEL (331 aa). 294-301 lines the ATP pocket; sequence GQTGSGKT. 3 positions are modified to phosphoserine: serine 465, serine 567, and serine 579. Positions 564-604 form a coiled coil; sequence GNLSKEEEELSSQMSSFNEAMTQIRELEERAVEELKEIIQQ.

This sequence belongs to the TRAFAC class myosin-kinesin ATPase superfamily. Kinesin family. MCAK/KIF2 subfamily. As to quaternary structure, interacts with CENPH. Interacts with MTUS2/TIP150; the interaction is direct. Interacts with MAPRE1; the interaction is direct, regulated by phosphorylation and is probably required for targeting to growing microtubule plus ends. Interacts with KIF18B at microtubule tips; this interaction increases the affinity of both partners for microtubule plus ends and is required for robust microtubule depolymerization. Phosphorylation by AURKA or AURKB strongly reduces KIF18B-binding. Phosphorylation by AURKB, regulates association with centromeres and kinetochores and the microtubule depolymerization activity. Post-translationally, ubiquitinated.

The protein localises to the cytoplasm. Its subcellular location is the cytoskeleton. The protein resides in the nucleus. It is found in the chromosome. It localises to the centromere. The protein localises to the kinetochore. In complex with KIF18B, constitutes the major microtubule plus-end depolymerizing activity in mitotic cells. Regulates the turnover of microtubules at the kinetochore and functions in chromosome segregation during mitosis. Plays a role in chromosome congression and is required for the lateral to end-on conversion of the chromosome-microtubule attachment. This is Kinesin-like protein KIF2C (KIF2C) from Macaca fascicularis (Crab-eating macaque).